Here is a 520-residue protein sequence, read N- to C-terminus: MSAKISIFQALVFLFYRFILRRYRNSKPKYQNGPSSLLQSDLSRHTLIFNVEGALLKSDSLFPYFMLVAFEAGGVIRSFLLFILYPLISLMSHEMGVKVMVMVSFFGIKKEGFRAGRAVLPKYFLEDVGLEMFEVLKRGGKKIGVSDDLPQVMIEGFLRDYLEIDVVVGREMKVVGGYYLGIMEDKTKHDLVFDELVRKERLNTGRVIGITSFNTSLHRYLFSQFCQEIYFVKKSDKRSWQTLPRSQYPKPLIFHDGRLAIKPTLMNTLVLFMWGPFAAAAAAARLFVSLCIPYSLSIPILAFSGCRLTVTNDYVSSQKQKPSQRKGCLFVCNHRTLLDPLYVAFALRKKNIKTVTYSLSRVSEILAPIKTVRLTRDRVSDGQAMEKLLTEGDLVVCPEGTTCREPYLLRFSPLFTEVSDVIVPVAVTVHVTFFYGTTASGLKALDPLFFLLDPYPTYTIQFLDPVSGATCQDPDGKLKFEVANNVQSDIGKALDFECTSLTRKDKYLILAGNNGVVKKN.

A run of 5 helical transmembrane segments spans residues 5-20 (ISIF…RFIL), 64-84 (YFML…LFIL), 88-108 (ISLM…FFGI), 264-284 (TLMN…AAAA), and 286-306 (LFVS…FSGC). The HXXXXD motif signature appears at 334–339 (HRTLLD).

It belongs to the GPAT/DAPAT family. Widely expressed at low level. Expressed at higher level in seedlings and leaves.

It is found in the membrane. The catalysed reaction is sn-glycerol 3-phosphate + an acyl-CoA = a 1-acyl-sn-glycero-3-phosphate + CoA. The protein operates within phospholipid metabolism; CDP-diacylglycerol biosynthesis; CDP-diacylglycerol from sn-glycerol 3-phosphate: step 1/3. Functionally, esterifies acyl-group from acyl-ACP to the sn-1 position of glycerol-3-phosphate, an essential step in glycerolipid biosynthesis. This Arabidopsis thaliana (Mouse-ear cress) protein is Probable glycerol-3-phosphate acyltransferase 3 (GPAT3).